A 184-amino-acid polypeptide reads, in one-letter code: Ribosome-recycling factor (184 aa).

Residues Asp-141 to Asp-164 are disordered.

The protein belongs to the RRF family.

The protein resides in the cytoplasm. Its function is as follows. Responsible for the release of ribosomes from messenger RNA at the termination of protein biosynthesis. May increase the efficiency of translation by recycling ribosomes from one round of translation to another. In Staphylococcus haemolyticus (strain JCSC1435), this protein is Ribosome-recycling factor.